Here is a 327-residue protein sequence, read N- to C-terminus: DNA-directed RNA polymerase subunit alpha (327 aa).

The tract at residues 1-233 (MVREKVKVST…NLFIPFLHVE (233 aa)) is alpha N-terminal domain (alpha-NTD). The interval 267 to 327 (LAFQYIFIDQ…KKILDILEKK (61 aa)) is alpha C-terminal domain (alpha-CTD).

This sequence belongs to the RNA polymerase alpha chain family. In terms of assembly, in plastids the minimal PEP RNA polymerase catalytic core is composed of four subunits: alpha, beta, beta', and beta''. When a (nuclear-encoded) sigma factor is associated with the core the holoenzyme is formed, which can initiate transcription.

Its subcellular location is the plastid. The protein resides in the chloroplast. The enzyme catalyses RNA(n) + a ribonucleoside 5'-triphosphate = RNA(n+1) + diphosphate. Functionally, DNA-dependent RNA polymerase catalyzes the transcription of DNA into RNA using the four ribonucleoside triphosphates as substrates. This is DNA-directed RNA polymerase subunit alpha from Draba nemorosa (Woodland whitlowgrass).